Here is a 299-residue protein sequence, read N- to C-terminus: Protoheme IX farnesyltransferase (299 aa).

The next 9 membrane-spanning stretches (helical) occupy residues 17–37 (VVALILLTAEVGMFLAVPAPY), 41–61 (GLLVLSASIGISMAAASAAVF), 91–111 (ALMWGVFLGLVGLGILQLFVN), 113–133 (ITMVLTFVSLIGYAIIYTLYL), 141–161 (IVIGGAAGAAPPVLGWTAVSG), 168–188 (ACLLFLIVFIWTPPHFWALAI), 207–227 (GLAYTRTQILLYTVLLLLVSL), 228–248 (LPYLASMSGLIYLVVAIALGI), and 266–286 (IAWCTFVYSINYLMLLFVTLL).

Belongs to the UbiA prenyltransferase family. Protoheme IX farnesyltransferase subfamily.

Its subcellular location is the cell inner membrane. The enzyme catalyses heme b + (2E,6E)-farnesyl diphosphate + H2O = Fe(II)-heme o + diphosphate. Its pathway is porphyrin-containing compound metabolism; heme O biosynthesis; heme O from protoheme: step 1/1. Functionally, converts heme B (protoheme IX) to heme O by substitution of the vinyl group on carbon 2 of heme B porphyrin ring with a hydroxyethyl farnesyl side group. In Ruthia magnifica subsp. Calyptogena magnifica, this protein is Protoheme IX farnesyltransferase.